A 157-amino-acid chain; its full sequence is Phosphopantetheine adenylyltransferase (157 aa).

The protein belongs to the eukaryotic CoaD family.

The protein resides in the cytoplasm. The catalysed reaction is (R)-4'-phosphopantetheine + ATP + H(+) = 3'-dephospho-CoA + diphosphate. The protein operates within cofactor biosynthesis; coenzyme A biosynthesis. In terms of biological role, reversibly transfers an adenylyl group from ATP to 4'-phosphopantetheine, yielding dephospho-CoA (dPCoA) and pyrophosphate. The protein is Phosphopantetheine adenylyltransferase of Methanopyrus kandleri (strain AV19 / DSM 6324 / JCM 9639 / NBRC 100938).